Here is a 369-residue protein sequence, read N- to C-terminus: Transmembrane protein 144 homolog A (369 aa).

A run of 10 helical transmembrane segments spans residues 6-26 (VIGY…YVPV), 35-55 (LSYA…AMMI), 63-83 (PIGI…IPII), 85-105 (LVGL…VGFF), 122-142 (DWMN…FFFI), 221-241 (VAGI…MIPM), 256-276 (IIFS…MFYA), 288-308 (TVFP…GLMI), 318-338 (GYPI…VFYF), and 347-367 (LLIL…LAFS).

It belongs to the TMEM144 family.

The protein localises to the membrane. The protein is Transmembrane protein 144 homolog A (tmem144A) of Dictyostelium discoideum (Social amoeba).